A 1058-amino-acid polypeptide reads, in one-letter code: Isoleucine--tRNA ligase (1058 aa).

The short motif at 48-58 (PYTTGHIHLGT) is the 'HIGH' region element. Residues 596 to 600 (KMSKS) carry the 'KMSKS' region motif. Lysine 599 contacts ATP.

Belongs to the class-I aminoacyl-tRNA synthetase family. IleS type 2 subfamily. In terms of assembly, monomer. Zn(2+) is required as a cofactor.

Its subcellular location is the cytoplasm. It carries out the reaction tRNA(Ile) + L-isoleucine + ATP = L-isoleucyl-tRNA(Ile) + AMP + diphosphate. In terms of biological role, catalyzes the attachment of isoleucine to tRNA(Ile). As IleRS can inadvertently accommodate and process structurally similar amino acids such as valine, to avoid such errors it has two additional distinct tRNA(Ile)-dependent editing activities. One activity is designated as 'pretransfer' editing and involves the hydrolysis of activated Val-AMP. The other activity is designated 'posttransfer' editing and involves deacylation of mischarged Val-tRNA(Ile). The polypeptide is Isoleucine--tRNA ligase (Methanosarcina mazei (strain ATCC BAA-159 / DSM 3647 / Goe1 / Go1 / JCM 11833 / OCM 88) (Methanosarcina frisia)).